Reading from the N-terminus, the 683-residue chain is Methionine--tRNA ligase (683 aa).

The 'HIGH' region signature appears at 15 to 25 (PYANGPIHLGH). 4 residues coordinate Zn(2+): Cys146, Cys149, Cys159, and Cys162. The short motif at 332–336 (KMSKS) is the 'KMSKS' region element. Residue Lys335 participates in ATP binding. The region spanning 581 to 683 (DFFKVDLRVA…AGAKAGQRVK (103 aa)) is the tRNA-binding domain.

This sequence belongs to the class-I aminoacyl-tRNA synthetase family. MetG type 1 subfamily. In terms of assembly, homodimer. The cofactor is Zn(2+).

It localises to the cytoplasm. It catalyses the reaction tRNA(Met) + L-methionine + ATP = L-methionyl-tRNA(Met) + AMP + diphosphate. Its function is as follows. Is required not only for elongation of protein synthesis but also for the initiation of all mRNA translation through initiator tRNA(fMet) aminoacylation. This is Methionine--tRNA ligase from Histophilus somni (strain 129Pt) (Haemophilus somnus).